We begin with the raw amino-acid sequence, 632 residues long: tRNA uridine 5-carboxymethylaminomethyl modification enzyme MnmG (632 aa).

FAD-binding positions include 15–20 (GAGHAG), I127, and S182. 276-290 (GPRYCPSIEDKIVRF) is a binding site for NAD(+). Q373 provides a ligand contact to FAD.

This sequence belongs to the MnmG family. As to quaternary structure, homodimer. Heterotetramer of two MnmE and two MnmG subunits. The cofactor is FAD.

It localises to the cytoplasm. Its function is as follows. NAD-binding protein involved in the addition of a carboxymethylaminomethyl (cmnm) group at the wobble position (U34) of certain tRNAs, forming tRNA-cmnm(5)s(2)U34. The chain is tRNA uridine 5-carboxymethylaminomethyl modification enzyme MnmG from Streptococcus pyogenes serotype M3 (strain SSI-1).